Consider the following 1756-residue polypeptide: Protein TIC 214 (1756 aa).

Helical transmembrane passes span 18–38, 54–74, 79–99, 128–148, 163–183, and 210–230; these read VSGP…LPFG, GYGI…FLSM, IYAA…YMFF, LFMD…NPVL, ISFM…LTIF, and FSLL…LPFL. The tract at residues 1469-1504 is disordered; that stretch reads KNKQVEDGQDKNGQVEDQDGQDQDGQVEDQQTDGKK. Residues 1471-1482 show a composition bias toward basic and acidic residues; it reads KQVEDGQDKNGQ. Residues 1484–1499 are compositionally biased toward acidic residues; that stretch reads EDQDGQDQDGQVEDQQ.

It belongs to the TIC214 family. Part of the Tic complex.

The protein resides in the plastid. It localises to the chloroplast inner membrane. Its function is as follows. Involved in protein precursor import into chloroplasts. May be part of an intermediate translocation complex acting as a protein-conducting channel at the inner envelope. The polypeptide is Protein TIC 214 (Pinus thunbergii (Japanese black pine)).